We begin with the raw amino-acid sequence, 212 residues long: Ribosomal RNA small subunit methyltransferase G (212 aa).

Residues G73, 127 to 128, and R143 contribute to the S-adenosyl-L-methionine site; that span reads IE.

It belongs to the methyltransferase superfamily. RNA methyltransferase RsmG family.

The protein resides in the cytoplasm. It catalyses the reaction guanosine(527) in 16S rRNA + S-adenosyl-L-methionine = N(7)-methylguanosine(527) in 16S rRNA + S-adenosyl-L-homocysteine. In terms of biological role, specifically methylates the N7 position of guanine in position 527 of 16S rRNA. The protein is Ribosomal RNA small subunit methyltransferase G of Methylobacterium sp. (strain 4-46).